The following is a 119-amino-acid chain: Small ribosomal subunit protein uS13 (119 aa).

Residues 90–119 (IRHRRGLPLRGQRTRSNARTRKGKRKPIRS) form a disordered region. Over residues 91–119 (RHRRGLPLRGQRTRSNARTRKGKRKPIRS) the composition is skewed to basic residues.

It belongs to the universal ribosomal protein uS13 family. In terms of assembly, part of the 30S ribosomal subunit. Forms a loose heterodimer with protein S19. Forms two bridges to the 50S subunit in the 70S ribosome.

Located at the top of the head of the 30S subunit, it contacts several helices of the 16S rRNA. In the 70S ribosome it contacts the 23S rRNA (bridge B1a) and protein L5 of the 50S subunit (bridge B1b), connecting the 2 subunits; these bridges are implicated in subunit movement. Contacts the tRNAs in the A and P-sites. The sequence is that of Small ribosomal subunit protein uS13 from Coxiella burnetii (strain CbuK_Q154) (Coxiella burnetii (strain Q154)).